Reading from the N-terminus, the 255-residue chain is Myogenic factor 5 (255 aa).

Residues 83–134 (DRRKAATMRERRRLKKVNQAFDTLKRCTTTNPNQRLPKVEILRNAIRYIESL) enclose the bHLH domain. A disordered region spans residues 217–249 (SEQPGLPLQDPASLSPVASTDSQPATPGASSSR). The segment covering 232 to 249 (PVASTDSQPATPGASSSR) has biased composition (polar residues).

In terms of assembly, efficient DNA binding requires dimerization with another bHLH protein.

The protein resides in the nucleus. In terms of biological role, acts as a transcriptional activator that promotes transcription of muscle-specific target genes and plays a role in muscle differentiation. Together with MYOG and MYOD1, co-occupies muscle-specific gene promoter core region during myogenesis. Induces fibroblasts to differentiate into myoblasts. Probable sequence specific DNA-binding protein. The chain is Myogenic factor 5 (MYF5) from Bos taurus (Bovine).